The primary structure comprises 396 residues: MAKEKFERTKPHVNVGTIGHVDHGKTTLTAAIATVLAAKFGGAAKKYDEIDAAPEEKARGITINTAHVEYETANRHYAHVDCPGHADYVKNMITGAAQMDGAILVCSAADGPMPQTREHILLARQVGVPYIIVFLNKCDMVDDAELLELVEMEVRELLSKYEFPGDDTPIIKGSAKLALEGDKGELGEVAIMNLADALDTYIPTPERAVDGTFLMPVEDVFSISGRGTVVTGRIERGVVKVGEEIEIVGIKPTVKTTCTGVEMFRKLLDQGQAGDNVGLLLRGTKREDVERGQVLCKPGSIKPHTHFTGEVYILSKDEGGRHTPFFNNYRPQFYFRTTDVTGSIELPKDKEMVMPGDNVSITVKLIAPIAMEEGLRFAIREGGRTVGAGVVAKILD.

The 197-residue stretch at 10-206 (KPHVNVGTIG…ALDTYIPTPE (197 aa)) folds into the tr-type G domain. The interval 19-26 (GHVDHGKT) is G1. 19–26 (GHVDHGKT) contributes to the GTP binding site. A Mg(2+)-binding site is contributed by threonine 26. The segment at 60–64 (GITIN) is G2. A G3 region spans residues 81–84 (DCPG). GTP contacts are provided by residues 81 to 85 (DCPGH) and 136 to 139 (NKCD). The interval 136–139 (NKCD) is G4. Residues 174-176 (SAK) form a G5 region.

It belongs to the TRAFAC class translation factor GTPase superfamily. Classic translation factor GTPase family. EF-Tu/EF-1A subfamily. As to quaternary structure, monomer.

Its subcellular location is the cytoplasm. The enzyme catalyses GTP + H2O = GDP + phosphate + H(+). Functionally, GTP hydrolase that promotes the GTP-dependent binding of aminoacyl-tRNA to the A-site of ribosomes during protein biosynthesis. The chain is Elongation factor Tu from Cupriavidus necator (strain ATCC 17699 / DSM 428 / KCTC 22496 / NCIMB 10442 / H16 / Stanier 337) (Ralstonia eutropha).